Here is a 150-residue protein sequence, read N- to C-terminus: Protein-export protein SecB (150 aa).

It belongs to the SecB family. In terms of assembly, homotetramer, a dimer of dimers. One homotetramer interacts with 1 SecA dimer.

The protein localises to the cytoplasm. In terms of biological role, one of the proteins required for the normal export of preproteins out of the cell cytoplasm. It is a molecular chaperone that binds to a subset of precursor proteins, maintaining them in a translocation-competent state. It also specifically binds to its receptor SecA. This chain is Protein-export protein SecB, found in Polaromonas sp. (strain JS666 / ATCC BAA-500).